The following is a 328-amino-acid chain: MKVNTLLVAVAAGTAMAAPQLKKRAGFTFFGVTEAGAEFGEKSIPGVWGTDYTFPDTESILTLISKGFNTFRIPFLMERLTPEMTGSFDEGYLKNLTSVVNAVTDAGAWAIVDAQNFGRFNGEIISSASDFQTWWKNVAAEFADNKNVIFDTNNEFHDMDQTLVLDLNQAAINGIRAAGATSQYIFVEGNSYTGAWTWTDNNDNLKSLTDPQDKIVYEMHQYLDTDGSGTHETCVSETIGAERVESATQWLKDNGKLGVIGEFAGGNNEICRAAVKSLLDALKENDDVWLGALWWAAGPWWEDYMFSMEPTDGIAYTGMLSTLEAYMN.

Residues 1 to 17 (MKVNTLLVAVAAGTAMA) form the signal peptide. N95 carries an N-linked (GlcNAc...) asparagine glycan. E155 serves as the catalytic Proton donor. E262 serves as the catalytic Nucleophile.

This sequence belongs to the glycosyl hydrolase 5 (cellulase A) family.

It is found in the secreted. The enzyme catalyses Endohydrolysis of (1-&gt;4)-beta-D-glucosidic linkages in cellulose, lichenin and cereal beta-D-glucans.. In terms of biological role, has endoglucanase activity on substrates containing beta-1,4 glycosidic bonds, like in carboxymethylcellulose (CMC), hydroxyethylcellulose (HEC) and beta-glucan. Involved in the degradation of complex natural cellulosic substrates. This Emericella nidulans (strain FGSC A4 / ATCC 38163 / CBS 112.46 / NRRL 194 / M139) (Aspergillus nidulans) protein is Endo-beta-1,4-glucanase B (eglB).